The following is a 532-amino-acid chain: Copalyl diphosphate synthase (532 aa).

A DXDDTA motif motif is present at residues 313-318 (DTDDTA). Positions 443 to 449 (QSDDGSW) match the QXXDGSW motif motif.

It belongs to the terpene synthase family. Mg(2+) serves as cofactor.

It catalyses the reaction (2E,6E,10E)-geranylgeranyl diphosphate = (+)-copalyl diphosphate. Functionally, involved in the biosynthesis of the mercapturic acid derivative diterpene cyslabdan A, a potentiator of the beta-lactam antibiotic imipenem. Catalyzes the conversion of geranylgeranyl diphosphate (GGDP) into (+)-copalyl diphosphate. The protein is Copalyl diphosphate synthase of Streptomyces cyslabdanicus.